The following is a 275-amino-acid chain: NAD(P)H dehydrogenase [quinone] 1 (275 aa).

FAD contacts are provided by residues H13, 19-20 (FN), and Q68. S83 bears the Phosphoserine mark. 105 to 108 (LQWF) is an FAD binding site. 127–129 (AYT) serves as a coordination point for substrate. FAD contacts are provided by residues 149–152 (TTGG), Y157, and R202. The tract at residues 226-275 (PSSLFDLNFQAGFLLKKEIEDEQKNNKYGLSVGHHLGKPIPTDNQIKARK) is important for apoenzyme conformational stability. Residue K252 forms a Glycyl lysine isopeptide (Lys-Gly) (interchain with G-Cter in SUMO2) linkage.

It belongs to the NAD(P)H dehydrogenase (quinone) family. In terms of assembly, homodimer. Interacts with PDLIM4 isoform 2; this interaction stabilizes PDLIM4 isoform 2 in response to oxidative stress and protects it from ubiquitin-independent degradation by the core 20S proteasome. Interacts with TP73 (via SAM domain); this interaction is NADH-dependent, stabilizes TP73 in response to oxidative stress and protects it from ubiquitin-independent degradation by the 20S proteasome. Interacts with TP53; this interaction is NADH-dependent, stabilizes TP53 in response to oxidative stress and protects it from ubiquitin-independent degradation by the 20S proteasome. FAD serves as cofactor.

The protein localises to the cytoplasm. It is found in the cytosol. The enzyme catalyses a quinone + NADH + H(+) = a quinol + NAD(+). It carries out the reaction a quinone + NADPH + H(+) = a quinol + NADP(+). It catalyses the reaction ubiquinone-10 + NADH + H(+) = ubiquinol-10 + NAD(+). The catalysed reaction is menadione + NADH + H(+) = menadiol + NAD(+). Its function is as follows. Flavin-containing quinone reductase that catalyzes two-electron reduction of quinones to hydroquinones using either NADH or NADPH as electron donors. In a ping-pong kinetic mechanism, the electrons are sequentially transferred from NAD(P)H to flavin cofactor and then from reduced flavin to the quinone, bypassing the formation of semiquinone and reactive oxygen species. Regulates cellular redox state primarily through quinone detoxification. Reduces components of plasma membrane redox system such as coenzyme Q and vitamin quinones, producing antioxidant hydroquinone forms. In the process may function as superoxide scavenger to prevent hydroquinone oxidation and facilitate excretion. Alternatively, can activate quinones and their derivatives by generating redox reactive hydroquinones with DNA cross-linking antitumor potential. Acts as a gatekeeper of the core 20S proteasome known to degrade proteins with unstructured regions. Upon oxidative stress, interacts with tumor suppressors TP53 and TP73 in a NADH-dependent way and inhibits their ubiquitin-independent degradation by the 20S proteasome. The polypeptide is NAD(P)H dehydrogenase [quinone] 1 (NQO1) (Cavia porcellus (Guinea pig)).